The chain runs to 412 residues: Peptidase T (412 aa).

Residue His-84 participates in Zn(2+) binding. The active site involves Asp-86. Asp-146 contributes to the Zn(2+) binding site. Glu-179 (proton acceptor) is an active-site residue. Positions 180, 202, and 385 each coordinate Zn(2+).

The protein belongs to the peptidase M20B family. Zn(2+) serves as cofactor.

Its subcellular location is the cytoplasm. It catalyses the reaction Release of the N-terminal residue from a tripeptide.. Its function is as follows. Cleaves the N-terminal amino acid of tripeptides. The chain is Peptidase T from Haemophilus influenzae (strain ATCC 51907 / DSM 11121 / KW20 / Rd).